Consider the following 880-residue polypeptide: 3-isopropylmalate dehydratase large subunit gloJ (880 aa).

[4Fe-4S] cluster contacts are provided by Cys457, Cys520, and Cys523.

This sequence belongs to the aconitase/IPM isomerase family. LeuC type 2 subfamily. Requires [4Fe-4S] cluster as cofactor.

The catalysed reaction is (2R,3S)-3-isopropylmalate = (2S)-2-isopropylmalate. The protein operates within mycotoxin biosynthesis. 3-isopropylmalate dehydratase large subunit; part of the gene cluster that mediates the biosynthesis of pneumocandins, lipohexapeptides of the echinocandin family that prevent fungal cell wall formation by non-competitive inhibition of beta-1,3-glucan synthase. The 10,12-dimethylmyristoyl side chain is synthesized by the reducing polyketide synthase gloL/GLPKS4. The thioesterase gloN/GLHYD exclusively interacts with gloL/GLPKS4 to maintain turnover of the polyketide side chain. The 10R,12S-dimethylmyristic acid is then transferred to the first thiolation domain of the nonribosomal peptide synthetase gloA/GLNRPS4 by the acyl-AMP ligase gloD/GLligase, followed by its acylation to L-ornithine to trigger elongation of the cyclic hexapeptide. L-ornithine, 4R-hydroxyl-L-proline (generated from L-proline by the dioxygenase gloF/GLOXY2), 3S-hydroxyl-L-homotyrosine (generated by gloG/GLHtyB, gloH/GLHtyA, gloI/GLHtyC, gloJ/GLHtyD and hydroxylated at C-3 by the dioxygenase gloM/GLOXY1), 3R-hydroxyl-L-glutamine (generated from L-glutamine probably by the dioxygenase gloE/GLOXY3) and 3S-hydroxyl-L-proline (generated from L-proline by the dioxygenase gloF/GLOXY2 to yield pneumocandin B0), or 3S-hydroxyl-4S-methyl-L-proline (generated from L-leucine by the dioxygenase gloC/GLOXY4 to yield pneumocandin A0) are sequentially added to the growing chain. The last C domain of gloA/GLNRPS4 is proposed to be responsible for cyclization by condensation to form the peptide bond between L-ornithine and 3S-hydroxyl-4S-methyl-L-proline (for pneumocandin A0) or 3S-hydroxyl-L-proline (for pneumocandin B0). Finally, the subsequent C-4 hydroxylation of 3S-hydroxyl-L-homotyrosine and L-ornithine dihydroxylation at C-4 and C-5 are performed by the cytochrome P450 monooxygenases gloP/GLP450-1 and gloO/GLP450-2, respectively. This Glarea lozoyensis (strain ATCC 20868 / MF5171) protein is 3-isopropylmalate dehydratase large subunit gloJ.